Consider the following 307-residue polypeptide: Small ribosomal subunit biogenesis GTPase RsgA (307 aa).

In terms of domain architecture, CP-type G spans 82-240 (GRYGERIVVA…IADTPGLREV (159 aa)). Residues 131-134 (NKAD) and 182-190 (GPSGVGKSS) each bind GTP. Residues cysteine 264, cysteine 269, histidine 271, and cysteine 277 each contribute to the Zn(2+) site.

This sequence belongs to the TRAFAC class YlqF/YawG GTPase family. RsgA subfamily. As to quaternary structure, monomer. Associates with 30S ribosomal subunit, binds 16S rRNA. Zn(2+) serves as cofactor.

The protein localises to the cytoplasm. One of several proteins that assist in the late maturation steps of the functional core of the 30S ribosomal subunit. Helps release RbfA from mature subunits. May play a role in the assembly of ribosomal proteins into the subunit. Circularly permuted GTPase that catalyzes slow GTP hydrolysis, GTPase activity is stimulated by the 30S ribosomal subunit. In Gemmatimonas aurantiaca (strain DSM 14586 / JCM 11422 / NBRC 100505 / T-27), this protein is Small ribosomal subunit biogenesis GTPase RsgA.